The primary structure comprises 527 residues: DUF21 domain-containing protein At1g47330 (527 aa).

Residues 1-15 (MSSDIPCCGTTFSLY) are Extracellular-facing. A CNNM transmembrane domain is found at 8 to 191 (CGTTFSLYVV…GKGGDLTTDE (184 aa)). The helical transmembrane segment at 16–36 (VVIIIALVAFAGLMAGLTLGL) threads the bilayer. Residues 37–70 (MSLGLVDLEVLIKSGRPQDRINAGKIFPVVKNQH) lie on the Cytoplasmic side of the membrane. The chain crosses the membrane as a helical span at residues 71-91 (LLLCTLLIGNSMAMEALPIFL). Residues 92 to 93 (DK) are Extracellular-facing. A helical transmembrane segment spans residues 94 to 114 (IVPPWLAILLSVTLILVFGEI). Over 115 to 126 (MPQAVCTRYGLK) the chain is Cytoplasmic. A helical membrane pass occupies residues 127 to 147 (VGAIMAPFVRVLLVLFFPISY). Topologically, residues 148 to 527 (PISKVLDWML…PKHEESTQTL (380 aa)) are extracellular. CBS domains follow at residues 210-271 (MTPI…EVPL), 274-334 (MSMR…TKDE), and 366-435 (KSEN…ILDE). Disordered stretches follow at residues 307-335 (KDLDEQEQSPETSENGIERRKNKKTKDEL), 358-384 (ETGDAKSGKSENGEEQQGSGKTSLLAA), and 464-527 (ITQS…TQTL). Serine 315 carries the phosphoserine modification. Over residues 358–369 (ETGDAKSGKSEN) the composition is skewed to basic and acidic residues. Residues 464 to 501 (ITQSSSGSTSPNQTSHMATPDSSPTTKPSNSSPTRKPS) show a composition bias toward low complexity. The N-linked (GlcNAc...) asparagine glycan is linked to asparagine 475. Over residues 502-515 (VSSPTREPSDSSHS) the composition is skewed to polar residues. Positions 518-527 (PKHEESTQTL) are enriched in basic and acidic residues.

Its subcellular location is the membrane. The polypeptide is DUF21 domain-containing protein At1g47330 (CBSDUF7) (Arabidopsis thaliana (Mouse-ear cress)).